The following is a 744-amino-acid chain: Tripartite motif-containing protein 2 (744 aa).

Residue Ser-10 is modified to Phosphoserine. The segment at 23 to 64 (CSICLERYKNPKVLPCLHTFCERCLQNYIPAHSLTLSCPVCR) adopts an RING-type zinc-finger fold. A B box-type zinc finger spans residues 113 to 154 (GKPLSCPNHDGNVMDFYCQSCETAMCRECTEGEHAEHPTVPL). Zn(2+) contacts are provided by Cys-118, His-121, Cys-141, and His-146. A Filamin repeat occupies 320 to 421 (TTNAVASETV…IRGSPFKLKV (102 aa)). Phosphothreonine is present on Thr-371. Ser-375, Ser-424, and Ser-428 each carry phosphoserine. Positions 432-462 (EGVKRRVKSPGSGHVKQKAVKRPASMYSTGK) are disordered. NHL repeat units follow at residues 473 to 516 (IFRV…FSND), 520 to 563 (KSRF…FSSD), 564 to 605 (GKFK…FQPN), 609 to 652 (VTRF…FNQE), 656 to 699 (MLKF…FDGS), and 700 to 743 (GSFL…YRYL).

This sequence belongs to the TRIM/RBCC family. As to quaternary structure, forms homooligomers. Interacts with TRIM3; this interaction reduces TRIM2 activity. Interacts with myosin V; myosin V may not be a substrate for ubiquitination. Interacts with NEFL. Interacts with phosphorylated BCL2L11. Interacts with SIRPA. In terms of processing, RING-type zinc finger-dependent and UBE2D1-dependent autoubiquitination.

The protein localises to the cytoplasm. The enzyme catalyses S-ubiquitinyl-[E2 ubiquitin-conjugating enzyme]-L-cysteine + [acceptor protein]-L-lysine = [E2 ubiquitin-conjugating enzyme]-L-cysteine + N(6)-ubiquitinyl-[acceptor protein]-L-lysine.. It functions in the pathway protein modification; protein ubiquitination. UBE2D1-dependent E3 ubiquitin-protein ligase that mediates the ubiquitination of NEFL and of phosphorylated BCL2L11. Plays a neuroprotective function. May play a role in neuronal rapid ischemic tolerance. Plays a role in antiviral immunity and limits New World arenavirus infection independently of its ubiquitin ligase activity. This is Tripartite motif-containing protein 2 (TRIM2) from Ailuropoda melanoleuca (Giant panda).